Reading from the N-terminus, the 236-residue chain is Flagellar L-ring protein (236 aa).

Residues 1 to 24 form the signal peptide; sequence MKNKNRLNTIKLLSISLLIAVTTA. A lipid anchor (N-palmitoyl cysteine) is attached at C25. C25 carries the S-diacylglycerol cysteine lipid modification.

The protein belongs to the FlgH family. As to quaternary structure, the basal body constitutes a major portion of the flagellar organelle and consists of four rings (L,P,S, and M) mounted on a central rod.

It is found in the cell outer membrane. The protein localises to the bacterial flagellum basal body. Its function is as follows. Assembles around the rod to form the L-ring and probably protects the motor/basal body from shearing forces during rotation. The chain is Flagellar L-ring protein from Colwellia psychrerythraea (strain 34H / ATCC BAA-681) (Vibrio psychroerythus).